Here is a 221-residue protein sequence, read N- to C-terminus: Large ribosomal subunit protein uL16y (221 aa).

Belongs to the universal ribosomal protein uL16 family. Component of the small ribosomal subunit. Mature ribosomes consist of a small (40S) and a large (60S) subunit. The 40S subunit contains about 33 different proteins and 1 molecule of RNA (18S). The 60S subunit contains about 49 different proteins and 3 molecules of RNA (25S, 5.8S and 5S).

This Arabidopsis thaliana (Mouse-ear cress) protein is Large ribosomal subunit protein uL16y (RPL10B).